The following is a 136-amino-acid chain: Large ribosomal subunit protein bL17 (136 aa).

It belongs to the bacterial ribosomal protein bL17 family. As to quaternary structure, part of the 50S ribosomal subunit. Contacts protein L32.

This chain is Large ribosomal subunit protein bL17, found in Rickettsia africae (strain ESF-5).